The following is a 431-amino-acid chain: Enolase (431 aa).

A (2R)-2-phosphoglycerate-binding site is contributed by glutamine 163. Catalysis depends on glutamate 205, which acts as the Proton donor. Aspartate 242, glutamate 288, and aspartate 315 together coordinate Mg(2+). 4 residues coordinate (2R)-2-phosphoglycerate: lysine 340, arginine 369, serine 370, and lysine 391. Catalysis depends on lysine 340, which acts as the Proton acceptor.

It belongs to the enolase family. The cofactor is Mg(2+).

The protein localises to the cytoplasm. Its subcellular location is the secreted. The protein resides in the cell surface. It carries out the reaction (2R)-2-phosphoglycerate = phosphoenolpyruvate + H2O. It participates in carbohydrate degradation; glycolysis; pyruvate from D-glyceraldehyde 3-phosphate: step 4/5. Its function is as follows. Catalyzes the reversible conversion of 2-phosphoglycerate (2-PG) into phosphoenolpyruvate (PEP). It is essential for the degradation of carbohydrates via glycolysis. The sequence is that of Enolase from Bacillus mycoides (strain KBAB4) (Bacillus weihenstephanensis).